The following is a 79-amino-acid chain: Translational regulator CsrA (79 aa).

It belongs to the CsrA/RsmA family. In terms of assembly, homodimer; the beta-strands of each monomer intercalate to form a hydrophobic core, while the alpha-helices form wings that extend away from the core.

The protein localises to the cytoplasm. Functionally, a translational regulator that binds mRNA to regulate translation initiation and/or mRNA stability. Usually binds in the 5'-UTR at or near the Shine-Dalgarno sequence preventing ribosome-binding, thus repressing translation. Its main target seems to be the major flagellin gene, while its function is anatagonized by FliW. This Syntrophus aciditrophicus (strain SB) protein is Translational regulator CsrA.